A 651-amino-acid chain; its full sequence is ATP-dependent zinc metalloprotease FtsH (651 aa).

Residues 1 to 134 (MIVFATILFG…FTTDPQTAGP (134 aa)) lie on the Extracellular side of the membrane. The helical transmembrane segment at 135-155 (WARAIAVMAPFVLILLLFFLM) threads the bilayer. Residues 156–651 (TRTGRSASQS…PAMSVNGHRG (496 aa)) are Cytoplasmic-facing. 229-236 (GPPGTGKT) serves as a coordination point for ATP. His-451 is a binding site for Zn(2+). The active site involves Glu-452. Residues His-455 and Asp-527 each contribute to the Zn(2+) site.

This sequence in the central section; belongs to the AAA ATPase family. The protein in the C-terminal section; belongs to the peptidase M41 family. As to quaternary structure, homohexamer. Zn(2+) serves as cofactor.

Its subcellular location is the cell membrane. In terms of biological role, acts as a processive, ATP-dependent zinc metallopeptidase for both cytoplasmic and membrane proteins. Plays a role in the quality control of integral membrane proteins. The chain is ATP-dependent zinc metalloprotease FtsH from Rubrobacter xylanophilus (strain DSM 9941 / JCM 11954 / NBRC 16129 / PRD-1).